Reading from the N-terminus, the 416-residue chain is MLGNKLSISDLKDIKNKKVLVRVDFNVPIENGIIKDTNRITATLPTINHLKKEGASKIILISHCGRPDGLRNEKYTLKPVAETLKGLLGEEVLFLNDCVGKEVEDKINAAKENSVILLENLRFHIEEEGKGVDANGNKVKANKEDVEKFQNDLTKLADVFINDAFGTAHRAHSSMVGVKLNVKASGFLMKKELEYFSKALENPQRPLLAILGGAKVSDKIQLIKNLLDKVDRMIIGGGMAYTFKKVLNNMKIGTSLFDEAGSKIVGEIMEKAKAKNVQIFLPVDFKIADNFDNNANTKFVTDEEGIPDNWMGLDAGPKSIENYKDVILTSKTVIWNGPQGVFEMPNFAKGSIECLNLVVEVTKKGAITIVGGGDTASLVEQQNKKNEISHVSTGGGASLELLEGKELPGVLALSNK.

Positions 23, 24, 25, 26, 38, 39, 62, 63, 65, 66, 121, 122, 169, and 170 each coordinate (2R)-3-phosphoglycerate. Gly213 is a binding site for ADP. Gly213 contacts CDP. The AMP site is built by Ala214 and Lys215. Ala214 and Lys215 together coordinate ATP. Ala214 provides a ligand contact to Mg(2+). CDP is bound at residue Asp218. Residue Asp218 participates in Mg(2+) binding. Residue Lys219 participates in AMP binding. Residue Lys219 participates in ATP binding. An ADP-binding site is contributed by Gly237. Gly237 serves as a coordination point for CDP. AMP is bound by residues Gly238 and Gly312. The ATP site is built by Gly238 and Gly312. Residues Gly337 and Phe342 each contribute to the CDP site. Position 342 (Phe342) interacts with ADP. Glu343 lines the AMP pocket. A Mg(2+)-binding site is contributed by Asp374. Residue Thr375 coordinates ATP.

Belongs to the phosphoglycerate kinase family. As to quaternary structure, monomer. The cofactor is Mg(2+).

It carries out the reaction (2R)-3-phosphoglycerate + ATP = (2R)-3-phospho-glyceroyl phosphate + ADP. It participates in carbohydrate degradation; glycolysis; pyruvate from D-glyceraldehyde 3-phosphate: step 2/5. The protein is Phosphoglycerate kinase (PGK) of Plasmodium falciparum (isolate 3D7).